Here is a 20-residue protein sequence, read N- to C-terminus: Flagellar filament 33 kDa core protein (20 aa).

The protein belongs to the bacterial flagellin family. The flagellum consists of an outer layer composed of repeating units of FlaA around a core that contains one or all of five antigenically related polypeptides.

The protein localises to the periplasmic flagellum. It is found in the periplasm. In terms of biological role, component of the core of the flagella. The chain is Flagellar filament 33 kDa core protein from Spirochaeta aurantia.